The sequence spans 283 residues: Probable cytochrome c oxidase subunit 3 (283 aa).

6 helical membrane-spanning segments follow: residues 26–46 (PWPVLTSFALLLLVIGGVSFM), 51–71 (FNIYILSAGIISVGYCLYSWW), 94–114 (IGMALFILTEIVFFGVFFASF), 179–199 (CVTALALTILLGIFFTTMQAY), 217–237 (FYLATGFHGAHVIIGTIFLII), and 261–281 (AWYWHFVDVVWLFLFTFVYIF).

This sequence belongs to the cytochrome c oxidase subunit 3 family.

It is found in the cell membrane. The catalysed reaction is 4 Fe(II)-[cytochrome c] + O2 + 8 H(+)(in) = 4 Fe(III)-[cytochrome c] + 2 H2O + 4 H(+)(out). This Rickettsia conorii (strain ATCC VR-613 / Malish 7) protein is Probable cytochrome c oxidase subunit 3 (ctaE).